Here is a 273-residue protein sequence, read N- to C-terminus: Phosphate import ATP-binding protein PstB 1 (273 aa).

Residues I27–I268 form the ABC transporter domain. Position 59–66 (G59–S66) interacts with ATP.

The protein belongs to the ABC transporter superfamily. Phosphate importer (TC 3.A.1.7) family. The complex is composed of two ATP-binding proteins (PstB), two transmembrane proteins (PstC and PstA) and a solute-binding protein (PstS).

It localises to the cell inner membrane. The catalysed reaction is phosphate(out) + ATP + H2O = ADP + 2 phosphate(in) + H(+). Part of the ABC transporter complex PstSACB involved in phosphate import. Responsible for energy coupling to the transport system. This chain is Phosphate import ATP-binding protein PstB 1, found in Vibrio cholerae serotype O1 (strain ATCC 39315 / El Tor Inaba N16961).